The following is a 498-amino-acid chain: Oligopeptide transport system permease protein AmiC (498 aa).

6 helical membrane passes run 12 to 32, 279 to 299, 316 to 336, 359 to 379, 415 to 435, and 461 to 481; these read SLVS…TLVP, MIVS…ALAV, LSTG…VYIV, SYVL…AIWI, MVPL…GATL, and VVGL…LGDI. An ABC transmembrane type-1 domain is found at 280 to 479; that stretch reads IVSSAITGLI…CISIFSRLLG (200 aa).

This sequence belongs to the binding-protein-dependent transport system permease family. OppBC subfamily.

Its subcellular location is the cell membrane. Part of the binding-protein-dependent transport system for oligopeptides; probably responsible for the translocation of the substrate across the membrane. The protein is Oligopeptide transport system permease protein AmiC (amiC) of Streptococcus pneumoniae serotype 4 (strain ATCC BAA-334 / TIGR4).